The primary structure comprises 251 residues: Probable transcriptional regulatory protein Caul_0780 (251 aa).

The protein belongs to the TACO1 family.

The protein resides in the cytoplasm. This Caulobacter sp. (strain K31) protein is Probable transcriptional regulatory protein Caul_0780.